The primary structure comprises 267 residues: MNKPIGVIDSGVGGLTVAKEIMRQLPNETIYYLGDIARCPYGPRPGEEVKKFTTELAQKLMEFDIKMLVIACNTATAVALNYLQNILPIPVIGVIEPGARTAIMTTKNQNVLVLGTEGTIKSEAYRTHIKKINPNVNVYSVACPGFVPLVEQMRYKDPTITNIVIHQTLKQWRNSDADTVILGCTHYPLLYQPIYEYFSGTKTVISSGLETAREVSALLTFSNEHASYTEHPQHRFFATGDTTHIKNIIDEWLNMKVEVQRITVDDS.

Residues 9-10 (DS) and 41-42 (YG) each bind substrate. The active-site Proton donor/acceptor is Cys-72. Position 73–74 (73–74 (NT)) interacts with substrate. Catalysis depends on Cys-184, which acts as the Proton donor/acceptor. Residue 185–186 (TH) coordinates substrate.

The protein belongs to the aspartate/glutamate racemases family.

The catalysed reaction is L-glutamate = D-glutamate. It functions in the pathway cell wall biogenesis; peptidoglycan biosynthesis. In terms of biological role, provides the (R)-glutamate required for cell wall biosynthesis. The polypeptide is Glutamate racemase (Staphylococcus epidermidis (strain ATCC 12228 / FDA PCI 1200)).